Here is a 77-residue protein sequence, read N- to C-terminus: UPF0349 protein lmo2392 (77 aa).

This sequence belongs to the UPF0349 family.

This is UPF0349 protein lmo2392 from Listeria monocytogenes serovar 1/2a (strain ATCC BAA-679 / EGD-e).